A 281-amino-acid chain; its full sequence is 2-dehydro-3-deoxyphosphooctonate aldolase (281 aa).

The protein belongs to the KdsA family.

Its subcellular location is the cytoplasm. It catalyses the reaction D-arabinose 5-phosphate + phosphoenolpyruvate + H2O = 3-deoxy-alpha-D-manno-2-octulosonate-8-phosphate + phosphate. Its pathway is carbohydrate biosynthesis; 3-deoxy-D-manno-octulosonate biosynthesis; 3-deoxy-D-manno-octulosonate from D-ribulose 5-phosphate: step 2/3. The protein operates within bacterial outer membrane biogenesis; lipopolysaccharide biosynthesis. The polypeptide is 2-dehydro-3-deoxyphosphooctonate aldolase (Ectopseudomonas mendocina (strain ymp) (Pseudomonas mendocina)).